The sequence spans 362 residues: 2-aminoethylphosphonate--pyruvate transaminase (362 aa).

An N6-(pyridoxal phosphate)lysine modification is found at Lys193.

The protein belongs to the class-V pyridoxal-phosphate-dependent aminotransferase family. PhnW subfamily. As to quaternary structure, homodimer. The cofactor is pyridoxal 5'-phosphate.

The catalysed reaction is (2-aminoethyl)phosphonate + pyruvate = phosphonoacetaldehyde + L-alanine. Functionally, involved in phosphonate degradation. In Phocaeicola vulgatus (strain ATCC 8482 / DSM 1447 / JCM 5826 / CCUG 4940 / NBRC 14291 / NCTC 11154) (Bacteroides vulgatus), this protein is 2-aminoethylphosphonate--pyruvate transaminase.